A 220-amino-acid polypeptide reads, in one-letter code: Glutamine amidotransferase-like class 1 domain-containing protein 1 (220 aa).

Residues 1-35 (MASERLPSRPACLLVASGAAEGVSAQSFLHCFTLA) form the signal peptide. 2 N-linked (GlcNAc...) asparagine glycosylation sites follow: Asn57 and Asn201.

Belongs to the peptidase C56 family. In terms of assembly, homotetramer. Component of the FERRY complex composed of five subunits, TBCK, PPP1R21, FERRY3, CRYZL1 and GATD1 with a ratio of 1:2:1:2:4, respectively.

It localises to the secreted. It is found in the early endosome. In terms of biological role, component of the FERRY complex (Five-subunit Endosomal Rab5 and RNA/ribosome intermediary). The FERRY complex directly interacts with mRNAs and RAB5A, and functions as a RAB5A effector involved in the localization and the distribution of specific mRNAs most likely by mediating their endosomal transport. The complex recruits mRNAs and ribosomes to early endosomes through direct mRNA-interaction. The polypeptide is Glutamine amidotransferase-like class 1 domain-containing protein 1 (Bos taurus (Bovine)).